Here is a 778-residue protein sequence, read N- to C-terminus: Lon protease (778 aa).

The region spanning Leu6–Ile207 is the Lon N-terminal domain. ATP is bound at residue Gly356–Thr363. A Lon proteolytic domain is found at Glu592–Gly773. Active-site residues include Ser679 and Lys722.

The protein belongs to the peptidase S16 family. Homohexamer. Organized in a ring with a central cavity.

The protein resides in the cytoplasm. It catalyses the reaction Hydrolysis of proteins in presence of ATP.. ATP-dependent serine protease that mediates the selective degradation of mutant and abnormal proteins as well as certain short-lived regulatory proteins. Required for cellular homeostasis and for survival from DNA damage and developmental changes induced by stress. Degrades polypeptides processively to yield small peptide fragments that are 5 to 10 amino acids long. Binds to DNA in a double-stranded, site-specific manner. This Rickettsia conorii (strain ATCC VR-613 / Malish 7) protein is Lon protease.